The sequence spans 441 residues: ATP-dependent protease ATPase subunit HslU (441 aa).

ATP contacts are provided by residues isoleucine 18, 60-65 (GVGKTE), aspartate 254, glutamate 319, and arginine 391.

It belongs to the ClpX chaperone family. HslU subfamily. In terms of assembly, a double ring-shaped homohexamer of HslV is capped on each side by a ring-shaped HslU homohexamer. The assembly of the HslU/HslV complex is dependent on binding of ATP.

It localises to the cytoplasm. In terms of biological role, ATPase subunit of a proteasome-like degradation complex; this subunit has chaperone activity. The binding of ATP and its subsequent hydrolysis by HslU are essential for unfolding of protein substrates subsequently hydrolyzed by HslV. HslU recognizes the N-terminal part of its protein substrates and unfolds these before they are guided to HslV for hydrolysis. In Shewanella halifaxensis (strain HAW-EB4), this protein is ATP-dependent protease ATPase subunit HslU.